A 285-amino-acid polypeptide reads, in one-letter code: NAD kinase (285 aa).

Asp-66 acts as the Proton acceptor in catalysis. Residues 66 to 67, 137 to 138, Arg-148, Arg-165, Asp-167, and 178 to 183 each bind NAD(+); these read DG, ND, and TAYSMS.

Belongs to the NAD kinase family. A divalent metal cation serves as cofactor.

The protein localises to the cytoplasm. The enzyme catalyses NAD(+) + ATP = ADP + NADP(+) + H(+). Functionally, involved in the regulation of the intracellular balance of NAD and NADP, and is a key enzyme in the biosynthesis of NADP. Catalyzes specifically the phosphorylation on 2'-hydroxyl of the adenosine moiety of NAD to yield NADP. This Chlorobium phaeobacteroides (strain DSM 266 / SMG 266 / 2430) protein is NAD kinase.